The following is a 496-amino-acid chain: MQGNLTALLITAIIVLTVVCIGFLAGRDKSSRTSVEEWSVGGRRFGGLLVWFLVGADLYTAYTFLGLTSTAFTGGSVAFFAIPYSVLAYFIAYFFLPKLWKVAKIHKLTTLADYARERFNSKLLASLVAIVGVLMLIPYICLQLSGIQDTLQVAGTGYINVKFVVIISFILVALYTFFSGIKGPTYTAIIKDILVWVIMLFMVVSLPLIHFNGWTPMIDTLVKEAPQMLTIPSEGPKGIPWFITASIVSALALFMWAHAATGVFTAKSADAVRKNSMFLPLYNIVLILVIFLGFIAFLVLPEDTNPRLALLHLIQTSYGGVAQGFAYATIALASLIPCSIMAIGASNLFANNLYRDLIHPNVSQSKLTLVTRSMVFVVIGLALLFGMLFPTALVTLQLLGVSGMVQIFPAIAVSLFWKNQTKEATVIGLLAGLAVTFIVYITQSAHGIYEGFWGLAANMIAVVILNPLFVKNAGSNPVIEGLFGKKQDANPNQKGA.

13 consecutive transmembrane segments (helical) span residues L5 to A25, F45 to L65, V77 to P97, L127 to I147, V161 to I181, I193 to G213, I239 to A259, F278 to L298, F325 to A345, M374 to V394, L396 to F416, A424 to S444, and E450 to V470.

Belongs to the sodium:solute symporter (SSF) (TC 2.A.21) family.

It is found in the cell membrane. This is an uncharacterized protein from Bacillus subtilis (strain 168).